The chain runs to 388 residues: L-lactate dehydrogenase (388 aa).

The region spanning 1 to 380 (MIISAASDYR…SADALSRVTR (380 aa)) is the FMN hydroxy acid dehydrogenase domain. Tyrosine 24 provides a ligand contact to substrate. Residues serine 106 and glutamine 127 each contribute to the FMN site. Tyrosine 129 is a binding site for substrate. Residue threonine 155 participates in FMN binding. Substrate is bound at residue arginine 164. FMN is bound at residue lysine 251. Histidine 275 functions as the Proton acceptor in the catalytic mechanism. Arginine 278 lines the substrate pocket. Position 306–330 (306–330 (DSGIRSGLDVVRMLALGADAVLLGR)) interacts with FMN.

Belongs to the FMN-dependent alpha-hydroxy acid dehydrogenase family. It depends on FMN as a cofactor.

It is found in the cell inner membrane. The enzyme catalyses (S)-lactate + A = pyruvate + AH2. Its function is as follows. Catalyzes the conversion of L-lactate to pyruvate. Is coupled to the respiratory chain. This Xanthomonas oryzae pv. oryzae (strain MAFF 311018) protein is L-lactate dehydrogenase.